Here is a 524-residue protein sequence, read N- to C-terminus: MGKPARKGCDWKRFLRNNWLLLSTVVAVVLGIVIGVLVREYSKLSNLEKFYFSFPGEILMRMLKLVILPLIVSSMITGVATLDSNVSGKIGLRAVVYYFCTTLIAVILGIVLVVSIKPGVTQKVNEIDRTGNTPEVSTVDAMLDLIRNMFPENLVQACFQQYKTTREEVELSEEPGTNSTEATVTAIMTTAISKNKTKEYKVVGMYSDGINVLGLIVFCLVLGIVIGRKWEKGQILVDFFNALSDATMKIVQIIMCYMPIGILFLIAGKIIEVEDWEIFRKLGLYMATVLSGLAIHSIVILPLIYFIIVRKNPFQFAMGMAQALLTALMISSSSATLPVTFRCAEEKNRVDKRITRFVLPVGATINMDGTALYEAVAAVFIAQLNDLDLSVGQIITISVTATAASIGAAGVPQPGLVTMVIVLSAVGLPAEDVTLIIAVDWLLDRFRTMVNVLGDAFGTGIVEKLSKKELEQMDVSSEVNIVNPFTLESTALDNEDSDTKKSYVNGGFAVDKSDTISFTQTSQF.

The Cytoplasmic segment spans residues methionine 1–asparagine 18. A helical membrane pass occupies residues tryptophan 19–valine 38. Residues arginine 39–arginine 61 lie on the Extracellular side of the membrane. Residues methionine 62 to leucine 82 form a helical membrane-spanning segment. Over aspartate 83 to arginine 93 the chain is Cytoplasmic. A helical transmembrane segment spans residues alanine 94 to valine 114. Na(+) contacts are provided by tyrosine 98, threonine 101, and threonine 102. At serine 115–methionine 205 the chain is on the extracellular side. 2 N-linked (GlcNAc...) asparagine glycosylation sites follow: asparagine 178 and asparagine 195. Residues tyrosine 206–lysine 229 form a helical membrane-spanning segment. The Cytoplasmic segment spans residues tryptophan 230–aspartate 238. The chain crosses the membrane as a helical span at residues phenylalanine 239–isoleucine 266. The Extracellular portion of the chain corresponds to alanine 267 to methionine 286. The chain crosses the membrane as a helical span at residues alanine 287–isoleucine 308. The Cytoplasmic segment spans residues valine 309–proline 313. Positions phenylalanine 314–alanine 344 form an intramembrane region, discontinuously helical. L-aspartate contacts are provided by serine 331 and serine 333. Over glutamate 345–arginine 353 the chain is Cytoplasmic. A helical transmembrane segment spans residues isoleucine 354–phenylalanine 380. Na(+)-binding residues include glycine 362, threonine 364, asparagine 366, and aspartate 368. Threonine 370 is a binding site for L-aspartate. Residues isoleucine 381–glutamine 393 lie on the Extracellular side of the membrane. Residues isoleucine 394–glycine 427 constitute an intramembrane region (discontinuously helical). Na(+) contacts are provided by serine 405, isoleucine 406, and alanine 408. Valine 411 contributes to the L-aspartate binding site. Topologically, residues leucine 428 to aspartate 440 are extracellular. Residues tryptophan 441–valine 462 form a helical membrane-spanning segment. 3 residues coordinate L-aspartate: arginine 447, threonine 448, and asparagine 451. The Na(+) site is built by asparagine 451 and aspartate 455. At glutamate 463–phenylalanine 524 the chain is on the cytoplasmic side. Phosphoserine is present on residues serine 517 and serine 522.

It belongs to the dicarboxylate/amino acid:cation symporter (DAACS) (TC 2.A.23) family. SLC1A1 subfamily. In terms of assembly, homotrimer. Interacts with ARL6IP5. Interacts with RTN2 (via N-terminus); the interaction promotes cell surface expression of SLC1A1. Interacts with SORCS2; this interaction is important for normal expression at the cell membrane.

The protein localises to the cell membrane. It localises to the apical cell membrane. The protein resides in the synapse. Its subcellular location is the synaptosome. It is found in the early endosome membrane. The protein localises to the late endosome membrane. It localises to the recycling endosome membrane. It carries out the reaction K(+)(in) + L-glutamate(out) + 3 Na(+)(out) + H(+)(out) = K(+)(out) + L-glutamate(in) + 3 Na(+)(in) + H(+)(in). It catalyses the reaction K(+)(in) + L-aspartate(out) + 3 Na(+)(out) + H(+)(out) = K(+)(out) + L-aspartate(in) + 3 Na(+)(in) + H(+)(in). The catalysed reaction is D-aspartate(out) + K(+)(in) + 3 Na(+)(out) + H(+)(out) = D-aspartate(in) + K(+)(out) + 3 Na(+)(in) + H(+)(in). The enzyme catalyses K(+)(in) + L-cysteine(out) + 3 Na(+)(out) + H(+)(out) = K(+)(out) + L-cysteine(in) + 3 Na(+)(in) + H(+)(in). Functionally, sodium-dependent, high-affinity amino acid transporter that mediates the uptake of L-glutamate and also L-aspartate and D-aspartate. Can also transport L-cysteine. Functions as a symporter that transports one amino acid molecule together with two or three Na(+) ions and one proton, in parallel with the counter-transport of one K(+) ion. Mediates Cl(-) flux that is not coupled to amino acid transport; this avoids the accumulation of negative charges due to aspartate and Na(+) symport. Plays an important role in L-glutamate and L-aspartate reabsorption in renal tubuli. Plays a redundant role in the rapid removal of released glutamate from the synaptic cleft, which is essential for terminating the postsynaptic action of glutamate. Contributes to glutathione biosynthesis and protection against oxidative stress via its role in L-glutamate and L-cysteine transport. Negatively regulated by ARL6IP5. The sequence is that of Excitatory amino acid transporter 3 (SLC1A1) from Bos taurus (Bovine).